Reading from the N-terminus, the 63-residue chain is Cecropin-A2 (63 aa).

Residues 1-23 form the signal peptide; that stretch reads MNFYNIFVFVALILAITIGQSEA. Arginine amide is present on R62.

The protein belongs to the cecropin family. As to expression, strongly expressed in larval, pupal and adult fat body and hemocytes after injection of bacteria. Maximal expression in the adult involves fat body cells of the head, thorax and abdomen.

It is found in the secreted. Cecropins have lytic and antibacterial activity against several Gram-positive and Gram-negative bacteria. The protein is Cecropin-A2 of Drosophila melanogaster (Fruit fly).